The sequence spans 318 residues: Myoblast determination protein 1 (318 aa).

Met-1 is covalently cross-linked (Peptide (Met-Gly) (interchain with G-Cter in ubiquitin)). Lys-104 bears the N6-methyllysine; by EHMT2 mark. The region spanning 109 to 160 (DRRKAATMRERRRLSKVNEAFETLKRCTSSNPNQRLPKVEILRNAIRYIEGL) is the bHLH domain. Disordered regions lie at residues 174–224 (AAAA…RRRN) and 266–318 (APAL…YQVL). Positions 197–207 (SDASSPRSNCS) are enriched in polar residues. Residues 266-276 (APALLLADAPP) are compositionally biased toward low complexity.

Efficient DNA binding requires dimerization with another bHLH protein. Seems to form active heterodimers with ITF-2. Interacts with SUV39H1. Interacts with DDX5. Interacts with CHD2. Interacts with TSC22D3. Interacts with SETD3. Interacts with P-TEFB complex; promotes the transcriptional activity of MYOD1 through its CDK9-mediated phosphorylation. Interacts with CSRP3. Interacts with NUPR1. In terms of processing, phosphorylated by CDK9. This phosphorylation promotes its function in muscle differentiation. Acetylated by a complex containing EP300 and PCAF. The acetylation is essential to activate target genes. Conversely, its deacetylation by SIRT1 inhibits its function. Post-translationally, ubiquitinated on the N-terminus; which is required for proteasomal degradation. In terms of processing, methylation at Lys-104 by EHMT2/G9a inhibits myogenic activity.

It is found in the nucleus. Its function is as follows. Acts as a transcriptional activator that promotes transcription of muscle-specific target genes and plays a role in muscle differentiation. Together with MYF5 and MYOG, co-occupies muscle-specific gene promoter core region during myogenesis. Induces fibroblasts to differentiate into myoblasts. Interacts with and is inhibited by the twist protein. This interaction probably involves the basic domains of both proteins. This chain is Myoblast determination protein 1 (MYOD1), found in Bos taurus (Bovine).